The following is a 467-amino-acid chain: MSTTAVFIPPQIMVTSNVEKVPISIITHSSDSNFIAYRLNNKLNIFDNKLNKLGELESGSQHTGIIRSIEFTKNNQSLITSSSDKFLKIWDTTNNFKNIKSINTNKKIICSILNKDDSEILVSDKCGDVFKYSLIDDSKNKIEVSGDKSAKHDEKESDKNLVFGHYSSIVDIKFSPCFNYLLSADRDEKIRVSHYPNCFDIESFCLGHTKYVTEILLVPGRDDLLISGSGDGTIKLWNWKQGKCLQTVDFNSKHENAITIPQVVFKVDATTTTNQLIFSIENSNNIYILPMNVEKGEFNQSELKTIPLTQSSPISIDLIDNGKTILASLLPTTKEVDVAIAFDSTTLSQQSDNKVVIAINSVDASTTLKPAELKSVLESIEKKQYRKHVSYSKQMMNSTDNKNKEDDDLSLDEQDIDDTTDINNNNKNKNQETIQDSRPLKLRKMTIEGDKEIQKELEEKESKKQEE.

WD repeat units follow at residues 61 to 100, 164 to 203, and 207 to 249; these read QHTG…KNIK, GHYS…DIES, and GHTK…QTVD. The disordered stretch occupies residues 415–467; sequence DIDDTTDINNNNKNKNQETIQDSRPLKLRKMTIEGDKEIQKELEEKESKKQEE. Positions 421 to 434 are enriched in low complexity; it reads DINNNNKNKNQETI. The span at 445-467 shows a compositional bias: basic and acidic residues; it reads MTIEGDKEIQKELEEKESKKQEE.

The protein belongs to the WD repeat TRM82 family. As to quaternary structure, forms a heterodimer with the catalytic subunit mettl1.

Its subcellular location is the nucleus. The protein operates within tRNA modification; N(7)-methylguanine-tRNA biosynthesis. Functionally, required for the formation of N(7)-methylguanine at position 46 (m7G46) in tRNA. In the complex, it is required to stabilize and induce conformational changes of the catalytic subunit. The chain is tRNA (guanine-N(7)-)-methyltransferase non-catalytic subunit wdr4 (wdr4) from Dictyostelium discoideum (Social amoeba).